A 329-amino-acid chain; its full sequence is Serine/threonine-protein phosphatase PP2A catalytic subunit (329 aa).

Positions 1-25 are disordered; sequence MDNNMEIDAARSPEPHHLSPTTDPG. Positions 8 to 17 are enriched in basic and acidic residues; the sequence is DAARSPEPHH. 4 residues coordinate Mn(2+): aspartate 77, histidine 79, aspartate 105, and asparagine 137. The active-site Proton donor is the histidine 138. 2 residues coordinate Mn(2+): histidine 187 and histidine 261. At leucine 329 the chain carries Leucine methyl ester.

The protein belongs to the PPP phosphatase family. PP-2A subfamily. Mn(2+) serves as cofactor.

It carries out the reaction O-phospho-L-seryl-[protein] + H2O = L-seryl-[protein] + phosphate. It catalyses the reaction O-phospho-L-threonyl-[protein] + H2O = L-threonyl-[protein] + phosphate. Involved in hyphal morphogenesis. The protein is Serine/threonine-protein phosphatase PP2A catalytic subunit (pphA) of Emericella nidulans (strain FGSC A4 / ATCC 38163 / CBS 112.46 / NRRL 194 / M139) (Aspergillus nidulans).